The primary structure comprises 325 residues: Probable WRKY transcription factor 11 (325 aa).

The segment at residues 240-306 (KIADIPPDEY…YEGEHRHNQS (67 aa)) is a DNA-binding region (WRKY).

The protein belongs to the WRKY group II-d family. In terms of tissue distribution, in young, mature and senescent leaves.

Its subcellular location is the nucleus. Transcription factor. Interacts specifically with the W box (5'-(T)TGAC[CT]-3'), a frequently occurring elicitor-responsive cis-acting element. Regulates rhizobacterium B.cereus AR156-induced systemic resistance (ISR) to P.syringae pv. tomato DC3000, probably by activating the jasmonic acid (JA)- signaling pathway. The chain is Probable WRKY transcription factor 11 (WRKY11) from Arabidopsis thaliana (Mouse-ear cress).